Consider the following 113-residue polypeptide: U11-theraphotoxin-Hhn1a (113 aa).

Positions 1 to 21 are cleaved as a signal peptide; the sequence is MNTVRATFLLVFVLAVSLGQA. Positions 22–74 are excised as a propeptide; it reads DKDENRMEMQEKTEQGKSYLDFAENLLLQKLEELEAKLLEEDSEESRNSRQKR. Residues 60 to 69 show a composition bias toward basic and acidic residues; sequence LEEDSEESRN. The tract at residues 60–82 is disordered; it reads LEEDSEESRNSRQKRCIGEGVPC. 3 cysteine pairs are disulfide-bonded: Cys75/Cys90, Cys82/Cys95, and Cys89/Cys110.

Belongs to the neurotoxin 14 (magi-1) family. 01 (HNTX-16) subfamily. In terms of tissue distribution, expressed by the venom gland.

The protein localises to the secreted. Its function is as follows. Probable ion channel inhibitor. This chain is U11-theraphotoxin-Hhn1a, found in Cyriopagopus hainanus (Chinese bird spider).